Reading from the N-terminus, the 4462-residue chain is Dynein axonemal heavy chain 17 (4462 aa).

The segment at Met-1 to Gln-1808 is stem. TPR repeat units lie at residues Thr-1019–Cys-1052 and Ile-1702–Val-1736. AAA regions lie at residues Tyr-1809–Val-2030, Lys-2090–Lys-2311, Glu-2417–Gly-2665, and Ser-2763–Tyr-3012. ATP is bound by residues Gly-1847 to Thr-1854, Gly-2128 to Ser-2135, Gly-2455 to Ser-2462, and Gly-2801 to Gln-2808. 2 coiled-coil regions span residues Tyr-3027–Val-3086 and Asp-3257–Lys-3309. Residues Tyr-3027–Glu-3313 form a stalk region. AAA stretches follow at residues Leu-3405 to Glu-3632 and Ile-3842 to Asn-4068. Residues Pro-4147–Glu-4182 form a TPR 3 repeat.

Belongs to the dynein heavy chain family. Consists of at least two heavy chains and a number of intermediate and light chains. Expressed in testis. Expressed in spermatozoa (at protein level). Not detected in airway epithelial cells (at protein level).

The protein localises to the cytoplasm. Its subcellular location is the cytoskeleton. It is found in the flagellum axoneme. Functionally, force generating protein component of the outer dynein arms (ODAs) in the sperm flagellum. Produces force towards the minus ends of microtubules. Dynein has ATPase activity; the force-producing power stroke is thought to occur on release of ADP. Plays a major role in sperm motility, implicated in sperm flagellar assembly and beating. The chain is Dynein axonemal heavy chain 17 from Homo sapiens (Human).